Reading from the N-terminus, the 378-residue chain is S-adenosylmethionine synthase (378 aa).

Position 15 (histidine 15) interacts with ATP. Aspartate 17 serves as a coordination point for Mg(2+). Position 43 (glutamate 43) interacts with K(+). L-methionine contacts are provided by glutamate 56 and glutamine 99. The flexible loop stretch occupies residues glutamine 99–arginine 109. ATP-binding positions include aspartate 164 to lysine 166, arginine 230 to phenylalanine 231, aspartate 239, arginine 245 to lysine 246, alanine 262, and lysine 266. Aspartate 239 contacts L-methionine. Residue lysine 270 participates in L-methionine binding.

This sequence belongs to the AdoMet synthase family. As to quaternary structure, homotetramer; dimer of dimers. Mg(2+) serves as cofactor. Requires K(+) as cofactor.

It localises to the cytoplasm. It catalyses the reaction L-methionine + ATP + H2O = S-adenosyl-L-methionine + phosphate + diphosphate. It functions in the pathway amino-acid biosynthesis; S-adenosyl-L-methionine biosynthesis; S-adenosyl-L-methionine from L-methionine: step 1/1. Its function is as follows. Catalyzes the formation of S-adenosylmethionine (AdoMet) from methionine and ATP. The overall synthetic reaction is composed of two sequential steps, AdoMet formation and the subsequent tripolyphosphate hydrolysis which occurs prior to release of AdoMet from the enzyme. In Buchnera aphidicola subsp. Acyrthosiphon pisum (strain 5A), this protein is S-adenosylmethionine synthase.